Reading from the N-terminus, the 408-residue chain is MTTKDPESEHPSVTLFRQYLRICTVQPNPDYGGAITFLEERARQLGLSCQKIEVVPGFVITVLTWPGTNPSLPSILLNSHTDVVPVFKEHWHHDPFEAFKDSEGYIYARGSQDMKSVSIQYLEAVRRLKSEGHRFPRTIHMTFVPDEEVGGHKGMELFVKRPEFQALRAGFALDEGLANPTDAFTVFYSERSPWWVRVTSTGKPGHASRFIEDTAAEKLHKVISSILAFREKERQRLQANPHLKEGAVTSVNLTKLEGGVAYNVVPATMSASFDFRVAPDVDMKAFEKQLQRWCQEAGEGVTFEFAQKFTEPRMTPTDDSDPWWAAFSGACKAMNLTLEPEIFPAATDSRYIRAVGIPALGFSPMNRTPVLLHDHNERLHEDIFLRGVDIYTGLLSALASVPTLPGES.

Residue H80 coordinates Zn(2+). D82 is an active-site residue. A Zn(2+)-binding site is contributed by D113. E147 functions as the Proton acceptor in the catalytic mechanism. Residues E148, E175, and H373 each contribute to the Zn(2+) site.

Belongs to the peptidase M20A family. As to quaternary structure, homodimer. Interacts with SPHK1. Requires Zn(2+) as cofactor.

The protein localises to the cytoplasm. The enzyme catalyses an N-acyl-L-amino acid + H2O = an L-alpha-amino acid + a carboxylate. The catalysed reaction is N-acetyl-L-methionine + H2O = L-methionine + acetate. It catalyses the reaction N-acetyl-L-glutamine + H2O = L-glutamine + acetate. In terms of biological role, catalyzes the hydrolysis of N-acetylated amino acids to acetate and free amino acids. The protein is Aminoacylase-1 (Acy1) of Mus musculus (Mouse).